The sequence spans 275 residues: 2,3,4,5-tetrahydropyridine-2,6-dicarboxylate N-succinyltransferase (275 aa).

Belongs to the transferase hexapeptide repeat family.

The protein localises to the cytoplasm. The catalysed reaction is (S)-2,3,4,5-tetrahydrodipicolinate + succinyl-CoA + H2O = (S)-2-succinylamino-6-oxoheptanedioate + CoA. The protein operates within amino-acid biosynthesis; L-lysine biosynthesis via DAP pathway; LL-2,6-diaminopimelate from (S)-tetrahydrodipicolinate (succinylase route): step 1/3. The polypeptide is 2,3,4,5-tetrahydropyridine-2,6-dicarboxylate N-succinyltransferase (Cupriavidus taiwanensis (strain DSM 17343 / BCRC 17206 / CCUG 44338 / CIP 107171 / LMG 19424 / R1) (Ralstonia taiwanensis (strain LMG 19424))).